Here is a 515-residue protein sequence, read N- to C-terminus: 2,3-bisphosphoglycerate-independent phosphoglycerate mutase (515 aa).

Mn(2+) contacts are provided by Asp14 and Ser64. Ser64 (phosphoserine intermediate) is an active-site residue. Substrate contacts are provided by residues His125, 155-156, Arg187, Arg193, 263-266, and Lys337; these read RD and RADR. Mn(2+) contacts are provided by Asp404, His408, Asp445, His446, and His464.

The protein belongs to the BPG-independent phosphoglycerate mutase family. Monomer. The cofactor is Mn(2+).

It catalyses the reaction (2R)-2-phosphoglycerate = (2R)-3-phosphoglycerate. It participates in carbohydrate degradation; glycolysis; pyruvate from D-glyceraldehyde 3-phosphate: step 3/5. Catalyzes the interconversion of 2-phosphoglycerate and 3-phosphoglycerate. The polypeptide is 2,3-bisphosphoglycerate-independent phosphoglycerate mutase (Yersinia pseudotuberculosis serotype I (strain IP32953)).